The chain runs to 76 residues: KANTR integral membrane protein (76 aa).

The signal sequence occupies residues 1-25; the sequence is MSPFSLLILVICAFSLFFLINLTRG. At 26–34 the chain is on the extracellular side; the sequence is LSILLVFSK. The chain crosses the membrane as a helical span at residues 35–55; the sequence is NQLLALLLLSIVSLFSISLIS. The Cytoplasmic segment spans residues 56–76; sequence ALIFFDLLPSTFFGFILLFFF.

The protein resides in the membrane. In Homo sapiens (Human), this protein is KANTR integral membrane protein.